Reading from the N-terminus, the 522-residue chain is Glucans biosynthesis protein G (522 aa).

The first 33 residues, 1–33, serve as a signal peptide directing secretion; the sequence is MLDNKFGFKQRVASLRWLSAAIMLSVSAVPAWA.

Belongs to the OpgD/OpgG family.

It is found in the periplasm. It functions in the pathway glycan metabolism; osmoregulated periplasmic glucan (OPG) biosynthesis. Functionally, involved in the biosynthesis of osmoregulated periplasmic glucans (OPGs). In Pectobacterium atrosepticum (strain SCRI 1043 / ATCC BAA-672) (Erwinia carotovora subsp. atroseptica), this protein is Glucans biosynthesis protein G.